The following is a 215-amino-acid chain: Nucleoside triphosphate pyrophosphatase (215 aa).

Belongs to the Maf family. The cofactor is a divalent metal cation.

It localises to the cytoplasm. The catalysed reaction is a ribonucleoside 5'-triphosphate + H2O = a ribonucleoside 5'-phosphate + diphosphate + H(+). It carries out the reaction a 2'-deoxyribonucleoside 5'-triphosphate + H2O = a 2'-deoxyribonucleoside 5'-phosphate + diphosphate + H(+). Nucleoside triphosphate pyrophosphatase. May have a dual role in cell division arrest and in preventing the incorporation of modified nucleotides into cellular nucleic acids. This Rickettsia conorii (strain ATCC VR-613 / Malish 7) protein is Nucleoside triphosphate pyrophosphatase.